Consider the following 306-residue polypeptide: MISASAVKELRERTGAGMMACKKALSEANGDSEKAVEILREKGLAAAAKKAGRVASEGLVVAYVNEDGKSGAIAEVNCETDFVSANEDFKALAENIVKLAAKSNSNTVEELLEENYVDGSSKLKDVITALIAKLGENINLRRFTKFSNENGTIQSYIHGDGRIGVLVNLNADKISDEVHTLAKDICMQIAAANPLYLDETSVDQTALDKEREIYKVQALNEGKPEKIVEKMVEGRIKKYLKEVCLLDQVWVRDSDLTISKLVAKKSKELSAAISIADFVRFERGEGIEKKEENFAEEVQKQMQQSK.

The involved in Mg(2+) ion dislocation from EF-Tu stretch occupies residues 80 to 83 (TDFV).

The protein belongs to the EF-Ts family.

Its subcellular location is the cytoplasm. In terms of biological role, associates with the EF-Tu.GDP complex and induces the exchange of GDP to GTP. It remains bound to the aminoacyl-tRNA.EF-Tu.GTP complex up to the GTP hydrolysis stage on the ribosome. This is Elongation factor Ts from Clostridium acetobutylicum (strain ATCC 824 / DSM 792 / JCM 1419 / IAM 19013 / LMG 5710 / NBRC 13948 / NRRL B-527 / VKM B-1787 / 2291 / W).